A 477-amino-acid polypeptide reads, in one-letter code: Myosin-binding protein H (477 aa).

The segment at 1-73 (MMEKNTSEGP…APPSEDVPSA (73 aa)) is disordered. Residues Thr6 and Thr26 each carry the phosphothreonine modification. The region spanning 73 to 168 (APLLLTLDDV…LDQPIHIREN (96 aa)) is the Fibronectin type-III 1 domain. Residues 172-260 (PKIRVPRHLR…EDLEAKAVID (89 aa)) form the Ig-like C2-type 1 domain. Residues 269-364 (PPSSIRLLDV…TKELAHIQKA (96 aa)) form the Fibronectin type-III 2 domain. Positions 382–466 (PSFTQPLADH…INVLGEASVD (85 aa)) constitute an Ig-like C2-type 2 domain.

This sequence belongs to the immunoglobulin superfamily. MyBP family. In terms of tissue distribution, mainly expressed in the skeletal muscle. Slightly expressed in the left atrium and arteria mammaria interna.

Its function is as follows. Binds to myosin; probably involved in interaction with thick myofilaments in the A-band. The polypeptide is Myosin-binding protein H (MYBPH) (Homo sapiens (Human)).